Consider the following 441-residue polypeptide: Glutamyl-tRNA reductase (441 aa).

Residues 49-52 (TCNR), serine 109, 114-116 (EGQ), and glutamine 120 each bind substrate. Cysteine 50 acts as the Nucleophile in catalysis. 198–203 (GAGRMS) contacts NADP(+).

It belongs to the glutamyl-tRNA reductase family. As to quaternary structure, homodimer.

The catalysed reaction is (S)-4-amino-5-oxopentanoate + tRNA(Glu) + NADP(+) = L-glutamyl-tRNA(Glu) + NADPH + H(+). It participates in porphyrin-containing compound metabolism; protoporphyrin-IX biosynthesis; 5-aminolevulinate from L-glutamyl-tRNA(Glu): step 1/2. It functions in the pathway porphyrin-containing compound metabolism; chlorophyll biosynthesis. In terms of biological role, catalyzes the NADPH-dependent reduction of glutamyl-tRNA(Glu) to glutamate 1-semialdehyde (GSA). This Prochlorococcus marinus (strain NATL2A) protein is Glutamyl-tRNA reductase.